Reading from the N-terminus, the 339-residue chain is Replication factor C subunit 5 (339 aa).

ATP is bound at residue 59 to 66 (GPPGTGKT).

Belongs to the activator 1 small subunits family. As to quaternary structure, subunit of the RFC complex, an heteropentameric complex consisting of a large subunit RFC1 and four small subunits RFC2, RFC3, RFC4 and RFC5; the RFC complex interacts with PCNA. Forms an heterotetrameric complex with RFC2, RFC3 and RFC4; this complex has ATPase activity but is not stimulated by PCNA. The heterotetramer of subunits RFC2, RFC3, RFC4 and RFC5 interacts with RAD17.

Its subcellular location is the nucleus. Functionally, subunit of the replication factor C (RFC) complex which acts during elongation of primed DNA templates by DNA polymerases delta and epsilon, and is necessary for ATP-dependent loading of proliferating cell nuclear antigen (PCNA) onto primed DNA. The polypeptide is Replication factor C subunit 5 (Rfc5) (Mus musculus (Mouse)).